The primary structure comprises 358 residues: Phosphoserine aminotransferase (358 aa).

Residue R43 coordinates L-glutamate. Residues W103, T153, D172, and Q195 each contribute to the pyridoxal 5'-phosphate site. An N6-(pyridoxal phosphate)lysine modification is found at K196. 236–237 (NT) contributes to the pyridoxal 5'-phosphate binding site.

This sequence belongs to the class-V pyridoxal-phosphate-dependent aminotransferase family. SerC subfamily. As to quaternary structure, homodimer. Pyridoxal 5'-phosphate serves as cofactor.

It is found in the cytoplasm. It catalyses the reaction O-phospho-L-serine + 2-oxoglutarate = 3-phosphooxypyruvate + L-glutamate. The catalysed reaction is 4-(phosphooxy)-L-threonine + 2-oxoglutarate = (R)-3-hydroxy-2-oxo-4-phosphooxybutanoate + L-glutamate. The protein operates within amino-acid biosynthesis; L-serine biosynthesis; L-serine from 3-phospho-D-glycerate: step 2/3. It participates in cofactor biosynthesis; pyridoxine 5'-phosphate biosynthesis; pyridoxine 5'-phosphate from D-erythrose 4-phosphate: step 3/5. Catalyzes the reversible conversion of 3-phosphohydroxypyruvate to phosphoserine and of 3-hydroxy-2-oxo-4-phosphonooxybutanoate to phosphohydroxythreonine. This Dichelobacter nodosus (strain VCS1703A) protein is Phosphoserine aminotransferase.